A 471-amino-acid polypeptide reads, in one-letter code: Ubiquitin carboxyl-terminal hydrolase 8 (471 aa).

Zn(2+)-binding residues include Cys-4, His-6, Cys-46, Cys-49, Cys-60, Cys-63, Cys-68, His-73, His-77, His-83, Cys-96, and Cys-99. The segment at 22 to 122 adopts a UBP-type; degenerate zinc-finger fold; sequence KTCNAARYIL…ILAKYWDDVC (101 aa). The USP domain maps to 137 to 468; that stretch reads SGLINMGSTC…QAYLLFYTIR (332 aa). The active-site Nucleophile is Cys-146. Zn(2+) contacts are provided by His-170, Cys-174, Cys-182, Cys-185, His-250, Cys-271, Cys-273, His-276, Cys-289, Cys-292, Cys-336, and Cys-339. His-427 serves as the catalytic Proton acceptor.

Belongs to the peptidase C19 family. UBP8 subfamily. In terms of assembly, component of the 1.8 MDa SAGA (Spt-Ada-Gcn5 acetyltransferase) complex, which is composed of 19 subunits TRA1, SPT7, TAF5, NGG1/ADA3, SGF73, SPT20/ADA5, SPT8, TAF12, TAF6, HFI1/ADA1, UBP8, GCN5, ADA2, SPT3, SGF29, TAF10, TAF9, SGF11 and SUS1. The SAGA complex is composed of 4 modules, namely the HAT (histone acetyltransferase) module (GCN5, ADA2, NGG1/ADA3 and SGF29), the DUB (deubiquitinating) module (UBP8, SGF11, SGF73 and SUS1), the core or TAF (TBP-associated factor) module (TAF5, TAF6, TAF9, TAF10 and TAF12), and the Tra1 or SPT (Suppressor of Ty) module (TRA1, HFI1/ADA1, SPT3, SPT7, SPT8 and SPT20/ADA5). The Tra1/SPT module binds activators, the core module recruits TBP (TATA-binding protein), the HAT module contains the histone H3 acetyltransferase GCN5, and the DUB module comprises the histone H2B deubiquitinase UBP8. Also identified in an altered form of SAGA, named SALSA (SAGA altered, Spt8 absent) or SLIK (SAGA-like) complex, which contains a C-terminal truncated form of SPT7 and is missing SPT8. However, it has been shown that the SAGA and SAGA-like SALSA/SLIK transcriptional coactivators are structurally and biochemically equivalent.

It is found in the nucleus. The catalysed reaction is Thiol-dependent hydrolysis of ester, thioester, amide, peptide and isopeptide bonds formed by the C-terminal Gly of ubiquitin (a 76-residue protein attached to proteins as an intracellular targeting signal).. In terms of biological role, histone deubiquitinating enzyme component of the transcription coactivator SAGA complex. SAGA acts as a general cofactor required for essentially all RNA polymerase II transcription. At the promoters, SAGA is required for transcription pre-initiation complex (PIC) recruitment. It influences RNA polymerase II transcriptional activity through different activities such as TBP interaction (via core/TAF module) and promoter selectivity, interaction with transcription activators (via Tra1/SPT module), and chromatin modification through histone acetylation (via HAT module) and deubiquitination (via DUB module). SAGA preferentially acetylates histones H3 (to form H3K9ac, H3K14ac, H3K18ac and H3K23ac) and H2B and deubiquitinates histone H2B. SAGA interacts with DNA via upstream activating sequences (UASs). Also identified in a modified version of SAGA named SALSA or SLIK. The cleavage of SPT7 and the absence of the SPT8 subunit in SLIK neither drive any major conformational differences in its structure compared with SAGA, nor significantly affect HAT, DUB, or DNA-binding activities. Within the DUB module, the correctly positioned zinc finger domains of SGF11 and SGF73 are both required to fully activate the ubiquitin hydrolase UBP8. The DUB module is also linked to the splicing efficiency of many transcripts. The sequence is that of Ubiquitin carboxyl-terminal hydrolase 8 (UBP8) from Saccharomyces cerevisiae (strain ATCC 204508 / S288c) (Baker's yeast).